The chain runs to 291 residues: START domain-containing protein 10 (291 aa).

At M1 the chain carries N-acetylmethionine. A disordered region spans residues 1–20 (MEKLAASTEPQGPRPVLGRE). Residues 14-224 (RPVLGRESVQ…MYKACLKYPE (211 aa)) form the START domain. 3 positions are modified to N6-succinyllysine: K94, K197, and K202. Phosphoserine occurs at positions 253 and 259. Positions 260–291 (LENIDESAVAESREERMGGAGGEGSDDDTSLT) are disordered. Residue S284 is modified to Phosphoserine; by CK2. S289 carries the post-translational modification Phosphoserine.

Post-translationally, phosphorylation at Ser-284 by CK2 negatively regulates lipid transfer activity, possibly by decreasing membrane association.

It is found in the cell projection. The protein localises to the cilium. Its subcellular location is the flagellum. It localises to the cytoplasm. The protein resides in the membrane. May play metabolic roles in sperm maturation or fertilization. Phospholipid transfer protein that preferentially selects lipid species containing a palmitoyl or stearoyl chain on the sn-1 and an unsaturated fatty acyl chain (18:1 or 18:2) on the sn-2 position. Able to transfer phosphatidylcholine (PC) and phosphatidyetanolamline (PE) between membranes. The chain is START domain-containing protein 10 (STARD10) from Homo sapiens (Human).